A 642-amino-acid polypeptide reads, in one-letter code: A-kinase anchor protein 8-like (642 aa).

Residues 1–269 (MSYTGFVQGS…MRRTWKTWTT (269 aa)) form a sufficient for activation of CTE-mediated expression region. An Asymmetric dimethylarginine; alternate modification is found at Arg209. Residue Arg209 is modified to Omega-N-methylarginine; alternate. Omega-N-methylarginine occurs at positions 218, 238, and 248. An N6-acetyllysine modification is found at Lys258. Residues 265–382 (KTWTTADFRT…QDKQKKRQRD (118 aa)) form a disordered region. Thr268 carries the phosphothreonine modification. A Nuclear localization signal motif is present at residues 275-280 (KKKKRK). Residues 281–297 (QGGSPDEPDSKATRTDC) carry the Nuclear export signal (NES) motif. Ser284 is modified (phosphoserine). Positions 288–297 (PDSKATRTDC) are enriched in basic and acidic residues. Thr293 is subject to Phosphothreonine. Ser298 carries the phosphoserine modification. Over residues 299–315 (DNSDSDNDEGTEGEAAE) the composition is skewed to acidic residues. The span at 338-350 (EDGREEGKEDPEK) shows a compositional bias: basic and acidic residues. The Nuclear localization signal motif lies at 363 to 365 (KRK). C2H2 AKAP95-type zinc fingers lie at residues 392–414 (CSLC…SKFH) and 485–508 (CAAC…TMDH). The tract at residues 546–642 (GENPFTDNPE…EDDEEGGGGP (97 aa)) is disordered. The segment covering 553 to 564 (NPEEEKEQDEVE) has biased composition (acidic residues). Residues 585–605 (AQPPVPLEPAPGTTTPPPPPP) show a composition bias toward pro residues. Residues 631 to 642 (DMEDDEEGGGGP) are compositionally biased toward acidic residues.

Belongs to the AKAP95 family. As to quaternary structure, interacts (via N-terminus) with DHX9 (via RGG region). Interacts with TMPO isoform Beta, PRPF40A, RNF43, lamin-B. Interacts with HDAC3; increased during mitosis. In terms of processing, phosphorylated on serine or threonine residues possibly by PKA.

It is found in the nucleus. Its subcellular location is the nucleus matrix. It localises to the nucleus speckle. The protein resides in the PML body. The protein localises to the cytoplasm. Could play a role in constitutive transport element (CTE)-mediated gene expression by association with DHX9. Increases CTE-dependent nuclear unspliced mRNA export. Proposed to target PRKACA to the nucleus but does not seem to be implicated in the binding of regulatory subunit II of PKA. May be involved in nuclear envelope breakdown and chromatin condensation. May be involved in anchoring nuclear membranes to chromatin in interphase and in releasing membranes from chromating at mitosis. May regulate the initiation phase of DNA replication when associated with TMPO isoform Beta. Required for cell cycle G2/M transition and histone deacetylation during mitosis. In mitotic cells recruits HDAC3 to the vicinity of chromatin leading to deacetylation and subsequent phosphorylation at 'Ser-10' of histone H3; in this function seems to act redundantly with AKAP8. May be involved in regulation of pre-mRNA splicing. This is A-kinase anchor protein 8-like (Akap8l) from Mus musculus (Mouse).